Consider the following 485-residue polypeptide: Aspartyl/glutamyl-tRNA(Asn/Gln) amidotransferase subunit B (485 aa).

This sequence belongs to the GatB/GatE family. GatB subfamily. As to quaternary structure, heterotrimer of A, B and C subunits.

It catalyses the reaction L-glutamyl-tRNA(Gln) + L-glutamine + ATP + H2O = L-glutaminyl-tRNA(Gln) + L-glutamate + ADP + phosphate + H(+). The enzyme catalyses L-aspartyl-tRNA(Asn) + L-glutamine + ATP + H2O = L-asparaginyl-tRNA(Asn) + L-glutamate + ADP + phosphate + 2 H(+). Its function is as follows. Allows the formation of correctly charged Asn-tRNA(Asn) or Gln-tRNA(Gln) through the transamidation of misacylated Asp-tRNA(Asn) or Glu-tRNA(Gln) in organisms which lack either or both of asparaginyl-tRNA or glutaminyl-tRNA synthetases. The reaction takes place in the presence of glutamine and ATP through an activated phospho-Asp-tRNA(Asn) or phospho-Glu-tRNA(Gln). This chain is Aspartyl/glutamyl-tRNA(Asn/Gln) amidotransferase subunit B, found in Ruminiclostridium cellulolyticum (strain ATCC 35319 / DSM 5812 / JCM 6584 / H10) (Clostridium cellulolyticum).